The following is a 302-amino-acid chain: Spheroidin-like protein (302 aa).

Positions 1-19 (MIALLIALFAAIHAPAVRS) are cleaved as a signal peptide. N-linked (GlcNAc...) asparagine; by host glycans are attached at residues N193 and N293.

Homodimer; disulfide-linked.

Its subcellular location is the host membrane. Functionally, component of the virus occlusion bodies, which are large proteinaceous structures (polyhedra), that protect the virus from the outside environment for extended periods until they are ingested by insect larvae. This is Spheroidin-like protein (SLP) from Autographa californica nuclear polyhedrosis virus (AcMNPV).